The sequence spans 340 residues: 4-hydroxy-3-methylbut-2-enyl diphosphate reductase (340 aa).

Cys18 lines the [4Fe-4S] cluster pocket. Residues His47 and His83 each contribute to the (2E)-4-hydroxy-3-methylbut-2-enyl diphosphate site. Residues His47 and His83 each coordinate dimethylallyl diphosphate. Isopentenyl diphosphate-binding residues include His47 and His83. Residue Cys105 coordinates [4Fe-4S] cluster. His133 contributes to the (2E)-4-hydroxy-3-methylbut-2-enyl diphosphate binding site. His133 is a dimethylallyl diphosphate binding site. His133 contributes to the isopentenyl diphosphate binding site. Glu135 acts as the Proton donor in catalysis. (2E)-4-hydroxy-3-methylbut-2-enyl diphosphate is bound at residue Thr174. A [4Fe-4S] cluster-binding site is contributed by Cys204. (2E)-4-hydroxy-3-methylbut-2-enyl diphosphate-binding residues include Ser232, Ser233, Asn234, and Ser277. 4 residues coordinate dimethylallyl diphosphate: Ser232, Ser233, Asn234, and Ser277. Residues Ser232, Ser233, Asn234, and Ser277 each contribute to the isopentenyl diphosphate site.

Belongs to the IspH family. [4Fe-4S] cluster is required as a cofactor.

It carries out the reaction isopentenyl diphosphate + 2 oxidized [2Fe-2S]-[ferredoxin] + H2O = (2E)-4-hydroxy-3-methylbut-2-enyl diphosphate + 2 reduced [2Fe-2S]-[ferredoxin] + 2 H(+). The enzyme catalyses dimethylallyl diphosphate + 2 oxidized [2Fe-2S]-[ferredoxin] + H2O = (2E)-4-hydroxy-3-methylbut-2-enyl diphosphate + 2 reduced [2Fe-2S]-[ferredoxin] + 2 H(+). It participates in isoprenoid biosynthesis; dimethylallyl diphosphate biosynthesis; dimethylallyl diphosphate from (2E)-4-hydroxy-3-methylbutenyl diphosphate: step 1/1. The protein operates within isoprenoid biosynthesis; isopentenyl diphosphate biosynthesis via DXP pathway; isopentenyl diphosphate from 1-deoxy-D-xylulose 5-phosphate: step 6/6. Catalyzes the conversion of 1-hydroxy-2-methyl-2-(E)-butenyl 4-diphosphate (HMBPP) into a mixture of isopentenyl diphosphate (IPP) and dimethylallyl diphosphate (DMAPP). Acts in the terminal step of the DOXP/MEP pathway for isoprenoid precursor biosynthesis. The sequence is that of 4-hydroxy-3-methylbut-2-enyl diphosphate reductase from Bartonella quintana (strain Toulouse) (Rochalimaea quintana).